A 509-amino-acid chain; its full sequence is ATP synthase subunit alpha (509 aa).

Residue 169–176 coordinates ATP; sequence GDRQTGKT.

Belongs to the ATPase alpha/beta chains family. As to quaternary structure, F-type ATPases have 2 components, CF(1) - the catalytic core - and CF(0) - the membrane proton channel. CF(1) has five subunits: alpha(3), beta(3), gamma(1), delta(1), epsilon(1). CF(0) has three main subunits: a(1), b(2) and c(9-12). The alpha and beta chains form an alternating ring which encloses part of the gamma chain. CF(1) is attached to CF(0) by a central stalk formed by the gamma and epsilon chains, while a peripheral stalk is formed by the delta and b chains.

The protein resides in the cell inner membrane. It carries out the reaction ATP + H2O + 4 H(+)(in) = ADP + phosphate + 5 H(+)(out). In terms of biological role, produces ATP from ADP in the presence of a proton gradient across the membrane. The alpha chain is a regulatory subunit. In Methylocella silvestris (strain DSM 15510 / CIP 108128 / LMG 27833 / NCIMB 13906 / BL2), this protein is ATP synthase subunit alpha.